Here is a 963-residue protein sequence, read N- to C-terminus: Importin-13 (963 aa).

HEAT repeat units follow at residues 24–54 (ENVEKALHQLYYDPNIDNKNLAQKWLMQAQV), 56–88 (PQAWHFSWQLLQPDKVPEIQYFGASALHIKISR), 95–135 (TDQY…LSMM), 142–179 (AVADMVRLFQAEDSPVDSQGRCLALLELLTVLPEEFQT), 194–231 (LAVECGTVFPLLEQLLQQPSSPSCVRQKVLKCFSSWVQ), 236–268 (LQDCEALIQAAFAALQDSELFDSSVEAIVNAIS), 276–325 (VNTL…ALLD), 330–372 (WQSF…DDIL), 375–438 (EAEK…YEML), 440–476 (AELLSNLYDKLGRLLTSSEEPYSWQHTEALLYGFQSI), 487–522 (VVPGLIGLIPRISISNVQLADTVMFTIGALSEWLAD), 524–558 (PVMINSVLPLVLHALGNPELSVSSVSTLKKICREC), 562–600 (LPPYAANIVAVSQDVLMKQIHKTSQCMWLMQALGFLLSA), 603–648 (VEEI…SNLF), 676–716 (PVVV…VKTL), 720–754 (FAPMVPQLCEMLGRMYSTVPQASALDLTRQLVHIF), 761–803 (FPPI…ALKR), 815–845 (VKAVFQCAVLALKFPEAPTVKASCGFFTELL), 860–893 (EDGRMLLIAVLEAIGGQASRSLMDCFADILFALN), and 897–931 (FSLLSMWIKEALQPPGFPSARLSPEQKDTFSQQIL). Residues 45 to 111 (AQKWLMQAQV…KAQLFTQITR (67 aa)) enclose the Importin N-terminal domain.

It belongs to the importin beta family. As to quaternary structure, interacts with UBC9, RAN, RBM8A, eIF-1A and PAX6.

It is found in the cytoplasm. Its subcellular location is the nucleus. Functionally, functions in nuclear protein import as nuclear transport receptor. Serves as receptor for nuclear localization signals (NLS) in cargo substrates. Is thought to mediate docking of the importin/substrate complex to the nuclear pore complex (NPC) through binding to nucleoporin and the complex is subsequently translocated through the pore by an energy requiring, Ran-dependent mechanism. At the nucleoplasmic side of the NPC, Ran binds to the importin, the importin/substrate complex dissociates and importin is re-exported from the nucleus to the cytoplasm where GTP hydrolysis releases Ran. The directionality of nuclear import is thought to be conferred by an asymmetric distribution of the GTP- and GDP-bound forms of Ran between the cytoplasm and nucleus. Mediates the nuclear import of UBC9, the RBM8A/MAGOH complex, PAX6 and probably other members of the paired homeobox family. Also mediates nuclear export of eIF-1A, and the cytoplasmic release of eIF-1A is triggered by the loading of import substrates onto IPO13. In Mus musculus (Mouse), this protein is Importin-13 (Ipo13).